Consider the following 620-residue polypeptide: UDP-glucose:protein N-beta-glucosyltransferase (620 aa).

Belongs to the glycosyltransferase 41 family.

Its subcellular location is the cytoplasm. It carries out the reaction L-asparaginyl-[protein] + UDP-alpha-D-glucose = N(4)-(beta-D-glucosyl)-L-asparaginyl-[protein] + UDP + H(+). It functions in the pathway protein modification; protein glycosylation. Its function is as follows. Inverting glycosyltransferase that catalyzes the transfer of one glucose moiety from UDP-glucose to an asparagine residue in peptides and proteins containing the NX(S/T) motif, resulting in their modification with a beta-linked 1,N-glucose. Likely acts as a key component of a general protein glycosylation system. The sequence is that of UDP-glucose:protein N-beta-glucosyltransferase from Actinobacillus pleuropneumoniae serotype 5b (strain L20).